A 278-amino-acid chain; its full sequence is 4-deoxy-L-threo-5-hexosulose-uronate ketol-isomerase (278 aa).

4 residues coordinate Zn(2+): His-196, His-198, Glu-203, and His-245.

Belongs to the KduI family. Zn(2+) is required as a cofactor.

The catalysed reaction is 5-dehydro-4-deoxy-D-glucuronate = 3-deoxy-D-glycero-2,5-hexodiulosonate. It participates in glycan metabolism; pectin degradation; 2-dehydro-3-deoxy-D-gluconate from pectin: step 4/5. Its function is as follows. Catalyzes the isomerization of 5-dehydro-4-deoxy-D-glucuronate to 3-deoxy-D-glycero-2,5-hexodiulosonate. The protein is 4-deoxy-L-threo-5-hexosulose-uronate ketol-isomerase of Enterobacter sp. (strain 638).